The primary structure comprises 374 residues: Alanine racemase (374 aa).

Lysine 40 functions as the Proton acceptor; specific for D-alanine in the catalytic mechanism. Residue lysine 40 is modified to N6-(pyridoxal phosphate)lysine. Arginine 136 lines the substrate pocket. The active-site Proton acceptor; specific for L-alanine is the tyrosine 264. Methionine 311 lines the substrate pocket.

It belongs to the alanine racemase family. The cofactor is pyridoxal 5'-phosphate.

The enzyme catalyses L-alanine = D-alanine. It participates in amino-acid biosynthesis; D-alanine biosynthesis; D-alanine from L-alanine: step 1/1. In terms of biological role, catalyzes the interconversion of L-alanine and D-alanine. May also act on other amino acids. This chain is Alanine racemase (alr), found in Pediococcus pentosaceus (strain ATCC 25745 / CCUG 21536 / LMG 10740 / 183-1w).